Consider the following 341-residue polypeptide: Protein BIG GRAIN 1-like C (341 aa).

Disordered stretches follow at residues 28–61 and 76–138; these read DGLQ…LTTL and SSTT…SDDD. Basic and acidic residues predominate over residues 52–61; sequence NKKDDKLTTL. Residues 76 to 92 show a composition bias toward low complexity; it reads SSTTTTNSSDSSSFSSS. The span at 105–138 shows a compositional bias: basic and acidic residues; that stretch reads KLAEQGKRSGDERQRTKRTVMDNDSRLFSKSDDD.

The protein belongs to the BIG GRAIN 1 (BG1) plant protein family.

The protein localises to the cell membrane. Involved in auxin transport. Regulator of the auxin signaling pathway. The chain is Protein BIG GRAIN 1-like C from Arabidopsis thaliana (Mouse-ear cress).